The chain runs to 370 residues: Probable dual-specificity RNA methyltransferase RlmN (370 aa).

Residue glutamate 91 is the Proton acceptor of the active site. Positions 97–329 (QHYGLSVCVT…KKNGVNCVVR (233 aa)) constitute a Radical SAM core domain. Cysteines 104 and 340 form a disulfide. Residues cysteine 111, cysteine 115, and cysteine 118 each contribute to the [4Fe-4S] cluster site. S-adenosyl-L-methionine is bound by residues 163 to 164 (GE), serine 195, 218 to 220 (SLH), and asparagine 296. Cysteine 340 functions as the S-methylcysteine intermediate in the catalytic mechanism.

This sequence belongs to the radical SAM superfamily. RlmN family. The cofactor is [4Fe-4S] cluster.

It is found in the cytoplasm. The catalysed reaction is adenosine(2503) in 23S rRNA + 2 reduced [2Fe-2S]-[ferredoxin] + 2 S-adenosyl-L-methionine = 2-methyladenosine(2503) in 23S rRNA + 5'-deoxyadenosine + L-methionine + 2 oxidized [2Fe-2S]-[ferredoxin] + S-adenosyl-L-homocysteine. It carries out the reaction adenosine(37) in tRNA + 2 reduced [2Fe-2S]-[ferredoxin] + 2 S-adenosyl-L-methionine = 2-methyladenosine(37) in tRNA + 5'-deoxyadenosine + L-methionine + 2 oxidized [2Fe-2S]-[ferredoxin] + S-adenosyl-L-homocysteine. Functionally, specifically methylates position 2 of adenine 2503 in 23S rRNA and position 2 of adenine 37 in tRNAs. This chain is Probable dual-specificity RNA methyltransferase RlmN, found in Streptococcus suis (strain 98HAH33).